An 80-amino-acid polypeptide reads, in one-letter code: Teretoxin Tan6.1 (80 aa).

An N-terminal signal peptide occupies residues 1 to 21 (MATSGRLLCLCLVLGLVFESL). Positions 22 to 34 (GHPGARLPKDGKR) are excised as a propeptide.

Belongs to the teretoxin M (TM) superfamily. Post-translationally, contains 3 disulfide bonds. As to expression, expressed by the venom duct.

The protein localises to the secreted. This chain is Teretoxin Tan6.1, found in Terebra anilis (Auger snail).